The chain runs to 76 residues: Dolichyl-diphosphooligosaccharide--protein glycosyltransferase subunit OST5 (76 aa).

The next 2 helical transmembrane spans lie at 14–34 (FYPV…ATFI) and 54–74 (ALIA…AGGI).

The protein belongs to the OST5 family. In terms of assembly, component of the oligosaccharyltransferase (OST) complex.

It localises to the membrane. Functionally, subunit of the oligosaccharyl transferase (OST) complex that catalyzes the initial transfer of a defined glycan (Glc(3)Man(9)GlcNAc(2) in eukaryotes) from the lipid carrier dolichol-pyrophosphate to an asparagine residue within an Asn-X-Ser/Thr consensus motif in nascent polypeptide chains, the first step in protein N-glycosylation. N-glycosylation occurs cotranslationally and the complex associates with the Sec61 complex at the channel-forming translocon complex that mediates protein translocation across the endoplasmic reticulum (ER). All subunits are required for a maximal enzyme activity. The chain is Dolichyl-diphosphooligosaccharide--protein glycosyltransferase subunit OST5 from Dictyostelium discoideum (Social amoeba).